The primary structure comprises 111 residues: uncharacterized protein (111 aa).

Gly2 is lipidated: N-myristoyl glycine; by host.

This is an uncharacterized protein from Acanthamoeba polyphaga mimivirus (APMV).